The sequence spans 154 residues: MVPPQRAKNDTSSAPDSAAETRGPLVSSGSGLGRRKSATARVYLSPGEGVFVVNGRDINEYFTSKLHRQFACQPLKILDLLGSYDVKVTLHGGGASGQAGAVRLGIARALNTIDPENNRKPLKSAGFLTRDSRVKERKKAGLKKARKAPQYSKR.

Disordered regions lie at residues Met-1 to Gly-33 and Pro-115 to Arg-154. Basic residues predominate over residues Lys-135–Arg-154.

It belongs to the universal ribosomal protein uS9 family.

The protein is Small ribosomal subunit protein uS9 of Tropheryma whipplei (strain TW08/27) (Whipple's bacillus).